The chain runs to 681 residues: Type VI secretion system spike protein VgrG2 (681 aa).

Residues 284–309 (AVAGSGKSNSSALQPGQTFSLTEHPN) are disordered. The segment covering 289–309 (GKSNSSALQPGQTFSLTEHPN) has biased composition (polar residues).

The protein belongs to the VgrG protein family.

In terms of biological role, part of the type VI secretion system specialized secretion system, which delivers several virulence factors in both prokaryotic and eukaryotic cells during infection. Plays an essential role in bacterial mobility and biofilm formation. The chain is Type VI secretion system spike protein VgrG2 from Aeromonas hydrophila.